The primary structure comprises 553 residues: Transcription factor GAMYB (553 aa).

A compositionally biased stretch (basic and acidic residues) spans 1–17 (MYRVKSESDCDMIHQEQ). The interval 1-45 (MYRVKSESDCDMIHQEQMDSPVADDGSSGGSPHRGGGPPLKKGPW) is disordered. A compositionally biased stretch (gly residues) spans 27–38 (SSGGSPHRGGGP). 2 consecutive HTH myb-type domains span residues 37–89 (GPPL…ANHL) and 90–144 (RPNL…KRCQ). DNA-binding regions (H-T-H motif) lie at residues 65–89 (WNAV…ANHL) and 117–140 (WARM…NTRI). Positions 464–489 (PAQSTSMGSGEQVMGPKYEPGDTSPH) are disordered.

Interacts with MYBS1. As to expression, expressed in aleurone cells, inflorescence shoot apical region, stamen primordia, and tapetum cells of the anther. Expressed at low level in roots and vegetative shoots.

It localises to the nucleus. Its function is as follows. Transcriptional activator of gibberellin-dependent alpha-amylase expression in aleurone cells. Involved in pollen and floral organs development. May bind to the 5'-TAACAAA-3' box of alpha-amylase promoter. Required for anther development. Functions in parallel with UDT1 to regulate early anther development. Functions upstream of the transcription factor TDR and may positively regulate its transcription. Required for pollen development. Probably required for controlling tapetal cell size and promoting tapetal programmed cell death (PCD) during anther development. Required for exine and Ubisch body formation in anthers. Interacts with the DNA specific motifs of giberrellin-up-regulated genes of anthers and regulates their expression. Positively regulates the expression of the laurate hydroxylase CYP703A3, known to be essential for the development of pollen exine and anther epicuticular layer. Functions with MYBS1 to integrate diverse nutrient starvation and gibberellin (GA) signaling pathways during germination of grains. Sugar, nitrogen and phosphate starvation signals converge and interconnect with GA to promote the co-nuclear import of GAMYB and MYBS1, resulting in the expression of a large set of GA-inducible hydrolases, transporters and regulators that are essential for mobilization of nutrient reserves in the endosperm to support seedling growth. The protein is Transcription factor GAMYB of Oryza sativa subsp. japonica (Rice).